Here is a 73-residue protein sequence, read N- to C-terminus: uncharacterized protein (73 aa).

The next 2 membrane-spanning stretches (helical) occupy residues 4-24 (LIPVALLTALLAGCAHDSPCV) and 51-71 (AGAIAGGAAAVAGLTMGIIAL).

The protein localises to the cell membrane. This is an uncharacterized protein from Escherichia coli O157:H7.